A 418-amino-acid chain; its full sequence is Gamma-glutamyl phosphate reductase (418 aa).

The protein belongs to the gamma-glutamyl phosphate reductase family.

Its subcellular location is the cytoplasm. It carries out the reaction L-glutamate 5-semialdehyde + phosphate + NADP(+) = L-glutamyl 5-phosphate + NADPH + H(+). It participates in amino-acid biosynthesis; L-proline biosynthesis; L-glutamate 5-semialdehyde from L-glutamate: step 2/2. Catalyzes the NADPH-dependent reduction of L-glutamate 5-phosphate into L-glutamate 5-semialdehyde and phosphate. The product spontaneously undergoes cyclization to form 1-pyrroline-5-carboxylate. In Geotalea daltonii (strain DSM 22248 / JCM 15807 / FRC-32) (Geobacter daltonii), this protein is Gamma-glutamyl phosphate reductase.